A 231-amino-acid chain; its full sequence is NADH-ubiquinone oxidoreductase chain 4 (231 aa).

The next 7 helical transmembrane spans lie at 1–21 (PIAG…YGII), 34–54 (LFIP…LTCL), 61–80 (SLIA…AVII), 84–106 (WGLS…LFCL), 118–138 (ILIL…WWLL), 156–176 (LLIV…LGLS), and 211–231 (LLMI…ELVI).

The protein belongs to the complex I subunit 4 family.

The protein resides in the mitochondrion membrane. The catalysed reaction is a ubiquinone + NADH + 5 H(+)(in) = a ubiquinol + NAD(+) + 4 H(+)(out). Core subunit of the mitochondrial membrane respiratory chain NADH dehydrogenase (Complex I) that is believed to belong to the minimal assembly required for catalysis. Complex I functions in the transfer of electrons from NADH to the respiratory chain. The immediate electron acceptor for the enzyme is believed to be ubiquinone. This chain is NADH-ubiquinone oxidoreductase chain 4 (MT-ND4), found in Hypnale hypnale (Merrem's hump-nosed viper).